A 433-amino-acid chain; its full sequence is Metacaspase-1 (433 aa).

The interval 1 to 123 (MYPGRAKPTY…PPSQVQHTGP (123 aa)) is disordered. Residues 9–44 (TYNNQQAQQAQSQVGYQTGYSNAQPQQQYYTAPQQQ) are compositionally biased toward low complexity. 2 stretches are compositionally biased toward polar residues: residues 45-55 (NVSGSSMSFQH) and 83-109 (QQNY…QQPQ). Residues His222 and Cys278 contribute to the active site.

Belongs to the peptidase C14B family.

Its function is as follows. Involved in cell death (apoptosis). This Kluyveromyces lactis (strain ATCC 8585 / CBS 2359 / DSM 70799 / NBRC 1267 / NRRL Y-1140 / WM37) (Yeast) protein is Metacaspase-1 (MCA1).